The chain runs to 243 residues: Carboxy-S-adenosyl-L-methionine synthase (243 aa).

S-adenosyl-L-methionine contacts are provided by residues Tyr-40, Gly-65–Ser-67, Asp-90–Asn-91, Asp-118–Ile-119, Asn-133, and Arg-200.

This sequence belongs to the class I-like SAM-binding methyltransferase superfamily. Cx-SAM synthase family. As to quaternary structure, homodimer.

The enzyme catalyses prephenate + S-adenosyl-L-methionine = carboxy-S-adenosyl-L-methionine + 3-phenylpyruvate + H2O. Functionally, catalyzes the conversion of S-adenosyl-L-methionine (SAM) to carboxy-S-adenosyl-L-methionine (Cx-SAM). In Shewanella amazonensis (strain ATCC BAA-1098 / SB2B), this protein is Carboxy-S-adenosyl-L-methionine synthase.